The sequence spans 953 residues: Scaffold attachment factor B2 (953 aa).

The disordered stretch occupies residues 1-29 (MAETLPGSGDSGPGTASLGPGVAETGTRR). N-acetylalanine is present on A2. An SAP domain is found at 30–64 (LSELRVIDLRAELKKRNLDTGGNKSVLMERLKKAV). The residue at position 54 (S54) is a Phosphoserine. K65 is covalently cross-linked (Glycyl lysine isopeptide (Lys-Gly) (interchain with G-Cter in SUMO1); alternate). K65 is covalently cross-linked (Glycyl lysine isopeptide (Lys-Gly) (interchain with G-Cter in SUMO2); alternate). The interval 91–114 (KGLKMEEEGTEDNGLEDDSRDGQE) is disordered. Residue K94 forms a Glycyl lysine isopeptide (Lys-Gly) (interchain with G-Cter in SUMO2) linkage. The segment covering 98 to 114 (EGTEDNGLEDDSRDGQE) has biased composition (acidic residues). Phosphoserine occurs at positions 109 and 158. Residues K188 and K199 each participate in a glycyl lysine isopeptide (Lys-Gly) (interchain with G-Cter in SUMO2) cross-link. Position 201 is a phosphothreonine (T201). The residue at position 207 (S207) is a Phosphoserine. The tract at residues 219-404 (ILGETCKSEP…KDEKGRVGSG (186 aa)) is disordered. Over residues 224–233 (CKSEPVKEES) the composition is skewed to basic and acidic residues. A Glycyl lysine isopeptide (Lys-Gly) (interchain with G-Cter in SUMO) cross-link involves residue K230. Polar residues predominate over residues 274-285 (SESTAHAQSSKA). Residues 292–308 (VKREPAEQPGDGERTDC) show a composition bias toward basic and acidic residues. K293 is covalently cross-linked (Glycyl lysine isopeptide (Lys-Gly) (interchain with G-Cter in SUMO)). Positions 318–329 (EQSSAASELAEA) are enriched in low complexity. The segment covering 345–358 (EARDSKEDGRKFDF) has biased composition (basic and acidic residues). The segment covering 370–382 (ESSTSEGADQKMS) has biased composition (polar residues). Glycyl lysine isopeptide (Lys-Gly) (interchain with G-Cter in SUMO2) cross-links involve residues K380, K385, K388, K391, and K395. A compositionally biased stretch (basic and acidic residues) spans 383 to 400 (SFKEEKDIKPIIKDEKGR). One can recognise an RRM domain in the interval 407–485 (RNLWVSGLSS…RMISVEKAKN (79 aa)). S507 and S513 each carry phosphoserine. Residues K517, K524, K525, K541, K542, and K551 each participate in a glycyl lysine isopeptide (Lys-Gly) (interchain with G-Cter in SUMO2) cross-link. The segment covering 525–551 (KEEKIEKKEEKKPEDIKKEEKDQDELK) has biased composition (basic and acidic residues). Disordered regions lie at residues 525–665 (KEEK…RLQR) and 684–953 (RERL…TRRY). Positions 555 to 564 (TNRSRVTKSG) are enriched in polar residues. Residues 567–579 (GMERTVVMDKSKG) are compositionally biased toward basic and acidic residues. Glycyl lysine isopeptide (Lys-Gly) (interchain with G-Cter in SUMO2) cross-links involve residues K578, K586, and K608. Basic and acidic residues-rich tracts occupy residues 590–665 (RSKE…RLQR) and 684–820 (RERL…DSRD). The interval 600 to 953 (DRKSESKEKR…PPYPHFTRRY (354 aa)) is interaction with SAFB1. Residue K616 forms a Glycyl lysine isopeptide (Lys-Gly) (interchain with G-Cter in SUMO2); alternate linkage. Position 616 is an N6-acetyllysine; alternate (K616). The Nuclear localization signal motif lies at 713 to 730 (RRQQEQLRYEQERRPGRR). 2 positions are modified to phosphoserine: S787 and S832. Over residues 843 to 859 (GGRDWGEHNQRLEEHQA) the composition is skewed to basic and acidic residues. Positions 881–890 (GERGLSGPSG) are enriched in gly residues. At S886 the chain carries Phosphoserine. Omega-N-methylarginine is present on residues R897 and R903. Residues 899–927 (GVAGRGGFAQGGHSQGHVVPGGGLEGGGV) show a composition bias toward gly residues.

In terms of assembly, interacts with SAFB/SAFB1 and SCAM1. Interacts with isoform 2 SRPK1 and inhibits its activity. As to expression, expressed at high levels in the CNS and at low levels in the liver. Expressed in a wide number of breast cancer cell lines.

The protein resides in the cytoplasm. Its subcellular location is the nucleus. Functionally, binds to scaffold/matrix attachment region (S/MAR) DNA. Can function as an estrogen receptor corepressor and can also inhibit cell proliferation. This is Scaffold attachment factor B2 (SAFB2) from Homo sapiens (Human).